Consider the following 195-residue polypeptide: Imidazoleglycerol-phosphate dehydratase (195 aa).

This sequence belongs to the imidazoleglycerol-phosphate dehydratase family.

The protein localises to the cytoplasm. The enzyme catalyses D-erythro-1-(imidazol-4-yl)glycerol 3-phosphate = 3-(imidazol-4-yl)-2-oxopropyl phosphate + H2O. Its pathway is amino-acid biosynthesis; L-histidine biosynthesis; L-histidine from 5-phospho-alpha-D-ribose 1-diphosphate: step 6/9. This is Imidazoleglycerol-phosphate dehydratase from Paracoccus denitrificans (strain Pd 1222).